We begin with the raw amino-acid sequence, 464 residues long: ESX-1 secretion system protein EccE1 (464 aa).

The next 2 helical transmembrane spans lie at 11-31 and 34-54; these read FTTG…AICM and DLLW…VLTI.

It belongs to the EccE family. In terms of assembly, part of the ESX-1 / type VII secretion system (T7SS), which is composed of cytosolic and membrane components. The ESX-1 membrane complex is composed of EccB1, EccCa1, EccCb1, EccD1 and EccE1.

The protein localises to the cell inner membrane. In terms of biological role, part of the ESX-1 / type VII specialized secretion system (T7SS), which exports several proteins including EsxA and EsxB. Plays a role in DNA conjugation, in at least a donor strain. The chain is ESX-1 secretion system protein EccE1 from Mycolicibacterium smegmatis (strain ATCC 700084 / mc(2)155) (Mycobacterium smegmatis).